Reading from the N-terminus, the 537-residue chain is Nedd4 binding protein 3 (537 aa).

Ser-172 carries the phosphoserine modification. Disordered regions lie at residues 173–234 (LDEG…VLSC), 327–359 (RKEL…EEEA), and 422–456 (LQEQ…EARE). A compositionally biased stretch (low complexity) spans 178 to 207 (PEPSLSDSSSGGSFGRSPGTGPSPFSSSLG). Positions 295-523 (VDRLHEVAQK…LEQELRVLRE (229 aa)) form a coiled coil.

The protein belongs to the N4BP3 family. Binds NEDD4. Interacts with 14-3-3 proteins. Interacts with MAVS.

The protein resides in the cytoplasmic vesicle. The protein localises to the cell projection. It is found in the axon. It localises to the dendrite. Plays a positive role in the antiviral innate immune signaling pathway. Mechanistically, interacts with MAVS and functions as a positive regulator to promote 'Lys-63'-linked polyubiquitination of MAVS and thus strengthens the interaction between MAVS and TRAF2. Also plays a role in axon and dendrite arborization during cranial nerve development. May also be important for neural crest migration and early development of other anterior structures including eye, brain and cranial cartilage. This Rattus norvegicus (Rat) protein is Nedd4 binding protein 3.